Reading from the N-terminus, the 366-residue chain is MKISELMEVLNNHVPFHQAESWDNVGLLIGNDKLDITGILTTLDCTDDVVNQAIELNTNTIIAHHPLIFKGVKRIVEDGYGSIIRKLIQNNINLIALHTNLDVNPKGVNRMLADQIGLENISMINTNSSYYYKVQTFIPKNYIEDFKDSLNELGLAKEGNYEYCFFESEGKGQFKPVGDASPYIGKLDSIEYVDEIKLEFMIKGNELEITKRAILDNHPYETPVFDFIKMNKESEYGLGIIGQLNQTMTLDEFSEYAKKQLNIPSVRYTGQHDSPIKKVAIIGGSGIGFEYKASQLGADVFVTGDIKHHDALDAKIQNVNLLDINHYSEYVMKEGLKELLEKWLFKYENQFPIYASEINTDPFKYK.

Positions 64, 65, 102, 326, and 329 each coordinate a divalent metal cation.

It belongs to the GTP cyclohydrolase I type 2/NIF3 family. Homohexamer.

The protein is GTP cyclohydrolase 1 type 2 homolog of Staphylococcus epidermidis (strain ATCC 12228 / FDA PCI 1200).